Here is a 494-residue protein sequence, read N- to C-terminus: Glutamyl-tRNA(Gln) amidotransferase subunit A (494 aa).

Catalysis depends on charge relay system residues lysine 81 and serine 156. Catalysis depends on serine 180, which acts as the Acyl-ester intermediate.

Belongs to the amidase family. GatA subfamily. As to quaternary structure, heterotrimer of A, B and C subunits.

The enzyme catalyses L-glutamyl-tRNA(Gln) + L-glutamine + ATP + H2O = L-glutaminyl-tRNA(Gln) + L-glutamate + ADP + phosphate + H(+). Functionally, allows the formation of correctly charged Gln-tRNA(Gln) through the transamidation of misacylated Glu-tRNA(Gln) in organisms which lack glutaminyl-tRNA synthetase. The reaction takes place in the presence of glutamine and ATP through an activated gamma-phospho-Glu-tRNA(Gln). In Mycobacterium tuberculosis (strain ATCC 25177 / H37Ra), this protein is Glutamyl-tRNA(Gln) amidotransferase subunit A.